A 680-amino-acid polypeptide reads, in one-letter code: Forkhead box protein P4 (680 aa).

Residues 1–17 (MMVESASETIRSAPSGQ) show a composition bias toward polar residues. The disordered stretch occupies residues 1 to 56 (MMVESASETIRSAPSGQNGVGSLSGQADGSSGGATGTTASGTGREVTTGADSNGEM). Ser52 and Ser86 each carry phosphoserine. Residues Lys175 and Lys246 each participate in a glycyl lysine isopeptide (Lys-Gly) (interchain with G-Cter in SUMO2) cross-link. The segment at 262 to 306 (FAAPPKVSPPLSHHTLPNGQPTVLTSRRDSSSHEETPGSHPLYGH) is disordered. Residues 276–286 (TLPNGQPTVLT) are compositionally biased toward polar residues. Basic and acidic residues predominate over residues 287–298 (SRRDSSSHEETP). The C2H2-type zinc-finger motif lies at 307–332 (GECKWPGCETLCEDLGQFIKHLNTEH). The tract at residues 349 to 370 (VQQLEIQLAKESERLQAMMAHL) is leucine-zipper. Lys378 participates in a covalent cross-link: Glycyl lysine isopeptide (Lys-Gly) (interchain with G-Cter in SUMO2). The segment at 407–445 (GLVHPPTSAAAPVTPLRPPGLGSASLHGGGPARRRSSDK) is disordered. The fork-head DNA-binding region spans 467-559 (RPPFTYASLI…KMTGSPTLVK (93 aa)). Ser554 is modified (phosphoserine). Residues 602 to 680 (PLSHDDVGAP…EEELPGEELS (79 aa)) form a disordered region. Residues 617–635 (SNGSSSPPRLSPPQYSHQV) are compositionally biased toward polar residues. The segment covering 668 to 680 (RDLEEELPGEELS) has biased composition (acidic residues).

As to quaternary structure, forms homodimers and heterodimers with FOXP1 and FOXP2. Dimerization is required for DNA-binding.

The protein localises to the nucleus. In terms of biological role, transcriptional repressor that represses lung-specific expression. The protein is Forkhead box protein P4 (FOXP4) of Homo sapiens (Human).